Reading from the N-terminus, the 143-residue chain is Large ribosomal subunit protein uL13 (143 aa).

This sequence belongs to the universal ribosomal protein uL13 family. As to quaternary structure, part of the 50S ribosomal subunit.

In terms of biological role, this protein is one of the early assembly proteins of the 50S ribosomal subunit, although it is not seen to bind rRNA by itself. It is important during the early stages of 50S assembly. The polypeptide is Large ribosomal subunit protein uL13 (Neisseria gonorrhoeae (strain ATCC 700825 / FA 1090)).